The following is a 112-amino-acid chain: Protein new-glue 2 (112 aa).

Positions Met1 to Ala24 are cleaved as a signal peptide. A compositionally biased stretch (low complexity) spans Ala24–Ser69. The interval Ala24–Glu112 is disordered. Repeat copies occupy residues Thr31–Thr38, Thr39–Thr46, Thr47–Thr54, and Thr55–Thr62. The segment at Thr31–Thr62 is 4 X 8 AA tandem repeats of T-S-A-S-A-T-T-T. Over residues Ser70–Glu112 the composition is skewed to basic residues.

To NG-1, also to SGS-3. In terms of tissue distribution, salivary gland specific.

Its subcellular location is the secreted. This Drosophila melanogaster (Fruit fly) protein is Protein new-glue 2 (ng2).